Consider the following 444-residue polypeptide: Exodeoxyribonuclease 7 large subunit (444 aa).

Belongs to the XseA family. As to quaternary structure, heterooligomer composed of large and small subunits.

Its subcellular location is the cytoplasm. The enzyme catalyses Exonucleolytic cleavage in either 5'- to 3'- or 3'- to 5'-direction to yield nucleoside 5'-phosphates.. In terms of biological role, bidirectionally degrades single-stranded DNA into large acid-insoluble oligonucleotides, which are then degraded further into small acid-soluble oligonucleotides. This is Exodeoxyribonuclease 7 large subunit from Xylella fastidiosa (strain M23).